The primary structure comprises 48 residues: Small, acid-soluble spore protein P (48 aa).

The segment covering 1–12 has biased composition (basic and acidic residues); the sequence is MTNKNDGKDMRK. Residues 1–48 are disordered; that stretch reads MTNKNDGKDMRKNAPKGDNPGQPEPLDGSKKVKNRNHTRQKHNTSHDM. Residues 31–48 are compositionally biased toward basic residues; the sequence is KVKNRNHTRQKHNTSHDM.

It belongs to the SspP family.

It is found in the spore core. The chain is Small, acid-soluble spore protein P from Geobacillus kaustophilus (strain HTA426).